The primary structure comprises 214 residues: Outer-membrane lipoprotein LolB (214 aa).

An N-terminal signal peptide occupies residues 1 to 25; the sequence is MNNLKRLTKTIFSCFTLSALLLLAG. Cys-26 carries the N-palmitoyl cysteine lipid modification. Cys-26 is lipidated: S-diacylglycerol cysteine.

Belongs to the LolB family. In terms of assembly, monomer.

It is found in the cell outer membrane. Plays a critical role in the incorporation of lipoproteins in the outer membrane after they are released by the LolA protein. In Shewanella baltica (strain OS155 / ATCC BAA-1091), this protein is Outer-membrane lipoprotein LolB.